The chain runs to 131 residues: MSYRIGIDIESISDVQAAAEKHKQFLDKVLTKSEQKQLAGRKGNGYYAYLAGRFSSKEAYAKATGFGIGSKVNFTDIEILDDENGAPRLSVSGRSLFLNAKSYQISISHKIKLDLVATEVLIEVEDGNSDS.

D8 and E58 together coordinate Mg(2+).

The protein belongs to the P-Pant transferase superfamily. AcpS family. Requires Mg(2+) as cofactor.

It is found in the cytoplasm. It catalyses the reaction apo-[ACP] + CoA = holo-[ACP] + adenosine 3',5'-bisphosphate + H(+). Transfers the 4'-phosphopantetheine moiety from coenzyme A to a Ser of acyl-carrier-protein. The chain is Holo-[acyl-carrier-protein] synthase from Oenococcus oeni (strain ATCC BAA-331 / PSU-1).